The sequence spans 229 residues: MAKKKAFTPLLYLASIVFLPWWISLLFQKSLESWVTNWWNTRQSETFLNDIEEKSILEKFIELEELLFLEEMIKEYSETHLQNLRIGIHKETIQLIKIHNEGRIHTILHFSTNIICFIILSGYSIFGNKELVILNSWAQEFLYNLSDTIKAFSLLLLTDLCIGFHSPHGWELMIGFVYKDFGFVHNDQIISGLVSTFPVILDTIFKYWIFRYLNRVSPSLVVIYHSMND.

Helical transmembrane passes span 7 to 27 (FTPL…SLLF), 107 to 127 (ILHF…SIFG), and 189 to 209 (IISG…KYWI).

The protein belongs to the CemA family.

It is found in the plastid. Its subcellular location is the chloroplast inner membrane. The catalysed reaction is K(+)(in) + H(+)(out) = K(+)(out) + H(+)(in). In terms of biological role, contributes to K(+)/H(+) antiport activity by supporting proton efflux to control proton extrusion and homeostasis in chloroplasts in a light-dependent manner to modulate photosynthesis. Prevents excessive induction of non-photochemical quenching (NPQ) under continuous-light conditions. Indirectly promotes efficient inorganic carbon uptake into chloroplasts. The protein is Potassium/proton antiporter CemA of Guizotia abyssinica (Niger).